The sequence spans 250 residues: 3-deoxy-manno-octulosonate cytidylyltransferase (250 aa).

It belongs to the KdsB family.

The protein resides in the cytoplasm. The enzyme catalyses 3-deoxy-alpha-D-manno-oct-2-ulosonate + CTP = CMP-3-deoxy-beta-D-manno-octulosonate + diphosphate. Its pathway is nucleotide-sugar biosynthesis; CMP-3-deoxy-D-manno-octulosonate biosynthesis; CMP-3-deoxy-D-manno-octulosonate from 3-deoxy-D-manno-octulosonate and CTP: step 1/1. It functions in the pathway bacterial outer membrane biogenesis; lipopolysaccharide biosynthesis. Its function is as follows. Activates KDO (a required 8-carbon sugar) for incorporation into bacterial lipopolysaccharide in Gram-negative bacteria. The sequence is that of 3-deoxy-manno-octulosonate cytidylyltransferase from Legionella pneumophila (strain Paris).